Reading from the N-terminus, the 114-residue chain is Putative neurotoxin 7 (114 aa).

This sequence belongs to the scolopendra neurotoxin 8 family. Contains 3 disulfide bonds. As to expression, expressed by the venom gland.

It is found in the secreted. The chain is Putative neurotoxin 7 from Scolopendra mutilans (Chinese red-headed centipede).